We begin with the raw amino-acid sequence, 183 residues long: RNA pyrophosphohydrolase (183 aa).

The Nudix hydrolase domain maps to 6-149; sequence GYRPNVGIIL…KREVYRLALE (144 aa). Positions 38-59 match the Nudix box motif; it reads GGINAGETPEQAMFRELEEEVG.

It belongs to the Nudix hydrolase family. RppH subfamily. Requires a divalent metal cation as cofactor.

Accelerates the degradation of transcripts by removing pyrophosphate from the 5'-end of triphosphorylated RNA, leading to a more labile monophosphorylated state that can stimulate subsequent ribonuclease cleavage. The sequence is that of RNA pyrophosphohydrolase from Thiobacillus denitrificans (strain ATCC 25259 / T1).